We begin with the raw amino-acid sequence, 428 residues long: MSQSDTIFDYKHIWHPYSSMNNPHPCYTVISAKGVYLKLKNRKYMIDGMSSWWAAIHGYNHPVLNKALKKQIRKMSHVMFGGITHPPAISLCRKLISLTPEKLDCVFLSDSGSVAIEVAIKMLIQYWQALGQKRKLFLTIRNGYHGDTFSAMSVSDPKNSFHQIYHNLLPKHLFADAPVSSFYKNWDNEDILSFKKIIEKNSFKIAGVILEPIVQGVGGMNFYHPMYLKQIKILCNHYSIPVIFDEIATGFGRTGKMFAFEHANVVPDILCLGKSITGGTITLAATLTSRHIADTISKGKVGCFMHGPTYMGNPLACAVANANIKILKTNQWKIQVLNIEKQLFKSLMPLINHPYVTDVRVLGAIGVVECSRSINMISIQKFFVENGVWIRPFKKLIYIVPPYIISPHTLKKLTNVISNALNKTELFI.

Trp-52 contacts substrate. 112-113 contributes to the pyridoxal 5'-phosphate binding site; that stretch reads GS. Tyr-144 contacts substrate. Asp-245 contributes to the pyridoxal 5'-phosphate binding site. Substrate-binding residues include Lys-274 and Gly-307. Lys-274 is modified (N6-(pyridoxal phosphate)lysine). 308-309 contacts pyridoxal 5'-phosphate; it reads PT. Arg-391 serves as a coordination point for substrate.

Belongs to the class-III pyridoxal-phosphate-dependent aminotransferase family. BioA subfamily. Homodimer. Pyridoxal 5'-phosphate serves as cofactor.

The protein resides in the cytoplasm. The catalysed reaction is (8S)-8-amino-7-oxononanoate + S-adenosyl-L-methionine = S-adenosyl-4-methylsulfanyl-2-oxobutanoate + (7R,8S)-7,8-diammoniononanoate. It functions in the pathway cofactor biosynthesis; biotin biosynthesis; 7,8-diaminononanoate from 8-amino-7-oxononanoate (SAM route): step 1/1. In terms of biological role, catalyzes the transfer of the alpha-amino group from S-adenosyl-L-methionine (SAM) to 7-keto-8-aminopelargonic acid (KAPA) to form 7,8-diaminopelargonic acid (DAPA). It is the only aminotransferase known to utilize SAM as an amino donor. In Buchnera aphidicola subsp. Acyrthosiphon pisum (strain APS) (Acyrthosiphon pisum symbiotic bacterium), this protein is Adenosylmethionine-8-amino-7-oxononanoate aminotransferase.